Reading from the N-terminus, the 316-residue chain is Haloacid dehalogenase-like hydrolase domain-containing protein At4g39970 (316 aa).

The N-terminal 46 residues, 1 to 46 (MAVSCNHSAILFSPSSTAGSSSVTSSSSLIGFPRFQTLRFKSRSVY), are a transit peptide targeting the chloroplast. Asp69 (nucleophile) is an active-site residue. 3 residues coordinate Mg(2+): Asp69, Asp71, and Asp259. Asp71 functions as the Proton donor in the catalytic mechanism.

This sequence belongs to the HAD-like hydrolase superfamily. DOG/GPP family. Requires Mg(2+) as cofactor.

Its subcellular location is the plastid. It localises to the chloroplast. The polypeptide is Haloacid dehalogenase-like hydrolase domain-containing protein At4g39970 (Arabidopsis thaliana (Mouse-ear cress)).